The chain runs to 235 residues: Fibrillarin-like rRNA/tRNA 2'-O-methyltransferase (235 aa).

S-adenosyl-L-methionine contacts are provided by residues threonine 91 to threonine 92, glutamate 110 to phenylalanine 111, aspartate 137 to alanine 138, and aspartate 157 to glutamine 160.

The protein belongs to the methyltransferase superfamily. Fibrillarin family. As to quaternary structure, interacts with nop5. Component of box C/D small ribonucleoprotein (sRNP) particles that contain rpl7ae, FlpA and nop5, plus a guide RNA.

Functionally, involved in pre-rRNA and tRNA processing. Utilizes the methyl donor S-adenosyl-L-methionine to catalyze the site-specific 2'-hydroxyl methylation of ribose moieties in rRNA and tRNA. Site specificity is provided by a guide RNA that base pairs with the substrate. Methylation occurs at a characteristic distance from the sequence involved in base pairing with the guide RNA. This is Fibrillarin-like rRNA/tRNA 2'-O-methyltransferase from Pyrobaculum islandicum (strain DSM 4184 / JCM 9189 / GEO3).